The primary structure comprises 245 residues: uncharacterized protein (245 aa).

Positions 29-96 (RSLIEATFQR…AQRGFHVTPM (68 aa)) constitute an HTH gntR-type domain. Positions 56 to 75 (IEDLKSRYEVSGGTVREALS) form a DNA-binding region, H-T-H motif.

This is an uncharacterized protein from Paraburkholderia xenovorans (strain LB400).